Reading from the N-terminus, the 1367-residue chain is Insulin-like growth factor 1 receptor (1367 aa).

The first 30 residues, 1-30 (MKSGSGGGSPTSLWGLLFLSAALSLWPTSG), serve as a signal peptide directing secretion. Cysteines 33 and 52 form a disulfide. Residues N51, N102, and N135 are each glycosylated (N-linked (GlcNAc...) asparagine). Intrachain disulfides connect C150/C178, C182/C205, C192/C211, C215/C224, C219/C230, C231/C239, C235/C248, C251/C260, C264/C276, C282/C303, C307/C321, C324/C328, and C332/C353. N244 carries N-linked (GlcNAc...) asparagine glycosylation. N-linked (GlcNAc...) asparagine glycosylation is present at N314. N-linked (GlcNAc...) asparagine glycans are attached at residues N417 and N438. A disulfide bridge links C455 with C488. Fibronectin type-III domains lie at 491-609 (DVLH…TNAS), 610-708 (VPSI…TEAE), 735-828 (PERK…TMPA), and 834-927 (IPGP…VQAK). 9 N-linked (GlcNAc...) asparagine glycosylation sites follow: N534, N607, N622, N640, N747, N756, N764, N900, and N913. Residues 741–935 (DVMQVANTTM…AKTGYENFIH (195 aa)) are Extracellular-facing. The chain crosses the membrane as a helical span at residues 936–959 (LIIALPVAVLLIVGGLVIMLYVFH). Residues 960–1367 (RKRNNSRLGN…ALPLPQSSTC (408 aa)) are Cytoplasmic-facing. The short motif at 977 to 980 (NPEY) is the IRS1- and SHC1-binding element. Residue Y980 is modified to Phosphotyrosine. Positions 999–1274 (ITMSRELGQG…SIKEEMEPGF (276 aa)) constitute a Protein kinase domain. Residues 1005–1013 (LGQGSFGMV) and K1033 each bind ATP. D1135 functions as the Proton acceptor in the catalytic mechanism. Phosphotyrosine; by autocatalysis is present on residues Y1161, Y1165, and Y1166. Glycyl lysine isopeptide (Lys-Gly) (interchain with G-Cter in ubiquitin) cross-links involve residues K1168 and K1171. S1278 carries the phosphoserine; by GSK3-beta modification. Position 1282 is a phosphoserine (S1282). Residues 1288 to 1367 (PEPEELDLEP…ALPLPQSSTC (80 aa)) form a disordered region. Positions 1290 to 1299 (PEELDLEPEN) are enriched in acidic residues. Positions 1300–1316 (MESVPLDPSASSSSLPL) are enriched in low complexity. The segment covering 1317 to 1326 (PDRHSGHKAE) has biased composition (basic and acidic residues).

Belongs to the protein kinase superfamily. Tyr protein kinase family. Insulin receptor subfamily. Tetramer of 2 alpha and 2 beta chains linked by disulfide bonds. The alpha chains contribute to the formation of the ligand-binding domain, while the beta chain carries the kinase domain. Interacts with PIK3R1 and with the PTB/PID domains of IRS1 and SHC1 in vitro when autophosphorylated on tyrosine residues. Forms a hybrid receptor with INSR, the hybrid is a tetramer consisting of 1 alpha chain and 1 beta chain of INSR and 1 alpha chain and 1 beta chain of IGF1R. Interacts with ARRB1 and ARRB2. Interacts with GRB10. Interacts with RACK1. Interacts with SOCS1, SOCS2 and SOCS3. Interacts with 14-3-3 proteins. Interacts with NMD2. Interacts with MAP3K5. Interacts with STAT3. Found in a ternary complex with IGF1 and ITGAV:ITGB3 or ITGA6:ITGB4. Interacts (nascent precursor form) with ZFAND2B. In terms of assembly, (Microbial infection) Interacts with human respiratory syncytial virus (HRSV) fusion glycoprotein F1/F2 heterodimer. Post-translationally, autophosphorylated on tyrosine residues in response to ligand binding. Autophosphorylation occurs in trans, i.e. one subunit of the dimeric receptor phosphorylates tyrosine residues on the other subunit. Autophosphorylation occurs in a sequential manner; Tyr-1165 is predominantly phosphorylated first, followed by phosphorylation of Tyr-1161 and Tyr-1166. While every single phosphorylation increases kinase activity, all three tyrosine residues in the kinase activation loop (Tyr-1165, Tyr-1161 and Tyr-1166) have to be phosphorylated for optimal activity. Can be autophosphorylated at additional tyrosine residues (in vitro). Autophosphorylated is followed by phosphorylation of juxtamembrane tyrosines and C-terminal serines. May also be phosphorylated at Tyr-1161 and Tyr-1166 by mTORC2. Phosphorylation of Tyr-980 is required for IRS1- and SHC1-binding. Phosphorylation of Ser-1278 by GSK-3beta restrains kinase activity and promotes cell surface expression, it requires a priming phosphorylation at Ser-1282. Dephosphorylated by PTPN1. In terms of processing, polyubiquitinated at Lys-1168 and Lys-1171 through both 'Lys-48' and 'Lys-29' linkages, promoting receptor endocytosis and subsequent degradation by the proteasome. Ubiquitination is facilitated by pre-existing phosphorylation. Sumoylated with SUMO1. Post-translationally, controlled by regulated intramembrane proteolysis (RIP). Undergoes metalloprotease-dependent constitutive ectodomain shedding to produce a membrane-anchored 52 kDa C-Terminal fragment which is further processed by presenilin gamma-secretase to yield an intracellular 50 kDa fragment. As to expression, found as a hybrid receptor with INSR in muscle, heart, kidney, adipose tissue, skeletal muscle, hepatoma, fibroblasts, spleen and placenta (at protein level). Expressed in a variety of tissues. Overexpressed in tumors, including melanomas, cancers of the colon, pancreas prostate and kidney.

It localises to the cell membrane. The enzyme catalyses L-tyrosyl-[protein] + ATP = O-phospho-L-tyrosyl-[protein] + ADP + H(+). With respect to regulation, activated by autophosphorylation at Tyr-1165, Tyr-1161 and Tyr-1166 on the kinase activation loop; phosphorylation at all three tyrosine residues is required for optimal kinase activity. Inhibited by MSC1609119A-1, BMS-754807, PQIP, benzimidazole pyridinone, isoquinolinedione, bis-azaindole, 3-cyanoquinoline, 2,4-bis-arylamino-1,3-pyrimidine, pyrrolopyrimidine, pyrrole-5-carboxaldehyde, picropodophyllin (PPP), tyrphostin derivatives. While most inhibitors bind to the ATP binding pocket, MSC1609119A-1 functions as allosteric inhibitor and binds close to the DFG motif and the activation loop. Functionally, receptor tyrosine kinase which mediates actions of insulin-like growth factor 1 (IGF1). Binds IGF1 with high affinity and IGF2 and insulin (INS) with a lower affinity. The activated IGF1R is involved in cell growth and survival control. IGF1R is crucial for tumor transformation and survival of malignant cell. Ligand binding activates the receptor kinase, leading to receptor autophosphorylation, and tyrosines phosphorylation of multiple substrates, that function as signaling adapter proteins including, the insulin-receptor substrates (IRS1/2), Shc and 14-3-3 proteins. Phosphorylation of IRSs proteins lead to the activation of two main signaling pathways: the PI3K-AKT/PKB pathway and the Ras-MAPK pathway. The result of activating the MAPK pathway is increased cellular proliferation, whereas activating the PI3K pathway inhibits apoptosis and stimulates protein synthesis. Phosphorylated IRS1 can activate the 85 kDa regulatory subunit of PI3K (PIK3R1), leading to activation of several downstream substrates, including protein AKT/PKB. AKT phosphorylation, in turn, enhances protein synthesis through mTOR activation and triggers the antiapoptotic effects of IGFIR through phosphorylation and inactivation of BAD. In parallel to PI3K-driven signaling, recruitment of Grb2/SOS by phosphorylated IRS1 or Shc leads to recruitment of Ras and activation of the ras-MAPK pathway. In addition to these two main signaling pathways IGF1R signals also through the Janus kinase/signal transducer and activator of transcription pathway (JAK/STAT). Phosphorylation of JAK proteins can lead to phosphorylation/activation of signal transducers and activators of transcription (STAT) proteins. In particular activation of STAT3, may be essential for the transforming activity of IGF1R. The JAK/STAT pathway activates gene transcription and may be responsible for the transforming activity. JNK kinases can also be activated by the IGF1R. IGF1 exerts inhibiting activities on JNK activation via phosphorylation and inhibition of MAP3K5/ASK1, which is able to directly associate with the IGF1R. When present in a hybrid receptor with INSR, binds IGF1. PubMed:12138094 shows that hybrid receptors composed of IGF1R and INSR isoform Long are activated with a high affinity by IGF1, with low affinity by IGF2 and not significantly activated by insulin, and that hybrid receptors composed of IGF1R and INSR isoform Short are activated by IGF1, IGF2 and insulin. In contrast, PubMed:16831875 shows that hybrid receptors composed of IGF1R and INSR isoform Long and hybrid receptors composed of IGF1R and INSR isoform Short have similar binding characteristics, both bind IGF1 and have a low affinity for insulin. The sequence is that of Insulin-like growth factor 1 receptor (IGF1R) from Homo sapiens (Human).